Consider the following 267-residue polypeptide: NAD kinase (267 aa).

Aspartate 45 serves as the catalytic Proton acceptor. Residues 45–46 (DG), 122–123 (NE), arginine 148, aspartate 150, 161–166 (TAYNKS), alanine 185, and glutamine 223 each bind NAD(+).

The protein belongs to the NAD kinase family. The cofactor is a divalent metal cation.

It is found in the cytoplasm. The enzyme catalyses NAD(+) + ATP = ADP + NADP(+) + H(+). Its function is as follows. Involved in the regulation of the intracellular balance of NAD and NADP, and is a key enzyme in the biosynthesis of NADP. Catalyzes specifically the phosphorylation on 2'-hydroxyl of the adenosine moiety of NAD to yield NADP. This Levilactobacillus brevis (strain ATCC 367 / BCRC 12310 / CIP 105137 / JCM 1170 / LMG 11437 / NCIMB 947 / NCTC 947) (Lactobacillus brevis) protein is NAD kinase.